The primary structure comprises 157 residues: MSLLIDIVDETGSVSEEMLKEVENLLQFAAEREGVQDQAEVSVTIVSNDDIHQINKEYRGKDAPTDVISFALEEEGEGEIEIVGAEMPPVLGDIIISADRTREQAEEYNHSFKRELGFLAVHGFLHLLGYDHMTKEEEEEMFTKQKELLDAYGLKRS.

His-122, His-126, and His-132 together coordinate Zn(2+).

This sequence belongs to the endoribonuclease YbeY family. Zn(2+) is required as a cofactor.

The protein localises to the cytoplasm. Single strand-specific metallo-endoribonuclease involved in late-stage 70S ribosome quality control and in maturation of the 3' terminus of the 16S rRNA. This Bacillus subtilis (strain 168) protein is Endoribonuclease YbeY.